Reading from the N-terminus, the 424-residue chain is Histidine--tRNA ligase (424 aa).

It belongs to the class-II aminoacyl-tRNA synthetase family. In terms of assembly, homodimer.

Its subcellular location is the cytoplasm. The enzyme catalyses tRNA(His) + L-histidine + ATP = L-histidyl-tRNA(His) + AMP + diphosphate + H(+). This is Histidine--tRNA ligase from Shigella flexneri.